A 251-amino-acid chain; its full sequence is MIILVSPAKKLNEERARGQATTVPRFLDQAAELAGVARTWSEDEIAKLMGISATLAKLNKDRFAAWSGDGQCAAGLMFDGDVYKELEPATFDDVTKDAAQRRLRILSGLYGLLRPTDAIEAYRLEMGRKTPGHPAGTLYGFWGDKIAAAIVEEARELGVGSVLNLASEEYAKAVPPKALGDLTLISPRFEEERGGSRKVIGVAAKRARGAMARWVLENGITEADDLKGFTVGGYAFDAETSAPQRPIFVRG.

This sequence belongs to the UPF0246 family.

This is UPF0246 protein TM1040_2658 from Ruegeria sp. (strain TM1040) (Silicibacter sp.).